A 662-amino-acid polypeptide reads, in one-letter code: p-hydroxybenzoic acid efflux pump subunit AaeB (662 aa).

Helical transmembrane passes span 22 to 42, 52 to 72, 76 to 96, 102 to 122, 129 to 149, 161 to 181, 378 to 398, 415 to 435, 439 to 459, 465 to 485, and 491 to 511; these read FAFK…HLQL, AAIV…SGAI, GMLR…IIIA, VVML…SSLV, IFGL…GTPL, EIVL…PRSI, LFWL…IAVV, FLFG…FIMP, QSML…GLEV, GSLG…PMTF, and LDSA…IMLI.

The protein belongs to the aromatic acid exporter ArAE (TC 2.A.85) family.

The protein localises to the cell inner membrane. Functionally, forms an efflux pump with AaeA. Could function as a metabolic relief valve, allowing to eliminate certain compounds when they accumulate to high levels in the cell. The chain is p-hydroxybenzoic acid efflux pump subunit AaeB from Pectobacterium atrosepticum (strain SCRI 1043 / ATCC BAA-672) (Erwinia carotovora subsp. atroseptica).